Consider the following 121-residue polypeptide: Ribonuclease P protein component (121 aa).

It belongs to the RnpA family. In terms of assembly, consists of a catalytic RNA component (M1 or rnpB) and a protein subunit.

It catalyses the reaction Endonucleolytic cleavage of RNA, removing 5'-extranucleotides from tRNA precursor.. Its function is as follows. RNaseP catalyzes the removal of the 5'-leader sequence from pre-tRNA to produce the mature 5'-terminus. It can also cleave other RNA substrates such as 4.5S RNA. The protein component plays an auxiliary but essential role in vivo by binding to the 5'-leader sequence and broadening the substrate specificity of the ribozyme. This is Ribonuclease P protein component from Desulfosudis oleivorans (strain DSM 6200 / JCM 39069 / Hxd3) (Desulfococcus oleovorans).